Here is a 1310-residue protein sequence, read N- to C-terminus: Cadherin-related family member 2 (1310 aa).

Positions 1-20 are cleaved as a signal peptide; that stretch reads MAQLWLSCFLLPALVVSVAA. The Extracellular portion of the chain corresponds to 21–1154; sequence NVAPKFLANM…ESDLSKQLIS (1134 aa). Cadherin domains are found at residues 27–124, 125–241, and 242–353; these read LANM…APVF, QNTA…DPQF, and VREF…KPEF. Residues Asn-29, Asn-134, Asn-182, Asn-188, Asn-195, Asn-300, Asn-355, Asn-371, Asn-401, Asn-460, Asn-565, Asn-600, Asn-616, Asn-632, Asn-680, Asn-696, Asn-701, Asn-775, Asn-821, Asn-871, Asn-877, Asn-911, Asn-932, and Asn-1107 are each glycosylated (N-linked (GlcNAc...) asparagine). 6 consecutive Cadherin domains span residues 368-480, 481-586, 586-695, 696-808, 810-928, and 930-1058; these read AQVN…RPTF, PQSL…APVV, VSGS…LPIF, NQSS…PPTL, VASL…APYF, and PENK…TPKE. The helical transmembrane segment at 1155–1175 threads the bilayer; the sequence is VIIGLGVALLLVLVIMTMAFV. The Cytoplasmic segment spans residues 1176–1310; the sequence is CVRKSYNRKL…TNAGLDTTDL (135 aa). The segment at 1180–1310 is mediates interaction with USH1C and MYO7B and is required for proper localization to microvilli tips and function in microvilli organization; sequence SYNRKLQAMK…TNAGLDTTDL (131 aa). Ser-1248 carries the post-translational modification Phosphoserine. Basic and acidic residues predominate over residues 1259–1268; that stretch reads NSQEIKEHRP. The segment at 1259-1310 is disordered; that stretch reads NSQEIKEHRPPHTPPEPDPEPLSVVLLGRQAGASGQLEGPSYTNAGLDTTDL. Phosphoserine is present on Ser-1299. Over residues 1299-1310 the composition is skewed to polar residues; the sequence is SYTNAGLDTTDL.

In terms of assembly, part of the IMAC/intermicrovillar adhesion complex/intermicrovillar tip-link complex composed of ANKS4B, MYO7B, USH1C, CDHR2 and CDHR5. Interacts with MAST2. Interacts (via cytoplasmic domain) with USH1C and MYO7B; required for proper localization of CDHR2 to microvilli tips and its function in brush border differentiation. In terms of tissue distribution, highly expressed in liver, kidney and colon. Moderately expressed in small intestine. Down-regulated in a number of liver and colon cancers. Expressed in duodenum with higher expression in enterocytes along the villus axis and lower expression in crypts (at protein level).

The protein localises to the apical cell membrane. The protein resides in the cell projection. It is found in the microvillus membrane. It localises to the cell junction. In terms of biological role, intermicrovillar adhesion molecule that forms, via its extracellular domain, calcium-dependent heterophilic complexes with CDHR5 on adjacent microvilli. Thereby, controls the packing of microvilli at the apical membrane of epithelial cells. Through its cytoplasmic domain, interacts with microvillus cytoplasmic proteins to form the intermicrovillar adhesion complex/IMAC. This complex plays a central role in microvilli and epithelial brush border differentiation. May also play a role in cell-cell adhesion and contact inhibition in epithelial cells. This Homo sapiens (Human) protein is Cadherin-related family member 2.